Reading from the N-terminus, the 659-residue chain is Ion-translocating oxidoreductase complex subunit C (659 aa).

4Fe-4S ferredoxin-type domains are found at residues 366 to 397 and 407 to 436; these read TEMGLSEPEQSCIRCGLCVDACPAGLLPQQLY and KARNHNLFDCIECGACAYVCPSNIPLVQYY. Positions 377, 380, 383, 387, 416, 419, 422, and 426 each coordinate [4Fe-4S] cluster.

This sequence belongs to the 4Fe4S bacterial-type ferredoxin family. RnfC subfamily. As to quaternary structure, the complex is composed of six subunits: RnfA, RnfB, RnfC, RnfD, RnfE and RnfG. [4Fe-4S] cluster serves as cofactor.

It is found in the cell inner membrane. In terms of biological role, part of a membrane-bound complex that couples electron transfer with translocation of ions across the membrane. The protein is Ion-translocating oxidoreductase complex subunit C of Yersinia pestis bv. Antiqua (strain Nepal516).